We begin with the raw amino-acid sequence, 135 residues long: Lactoylglutathione lyase (135 aa).

Positions 2 to 126 constitute a VOC domain; that stretch reads QILHTMLRVG…DGYKIEFIEN (125 aa). H5 lines the Ni(2+) pocket. R9 serves as a coordination point for substrate. E56 serves as a coordination point for Ni(2+). The substrate site is built by N60 and H74. Ni(2+) is bound by residues H74 and E122. The active-site Proton donor/acceptor is E122.

Belongs to the glyoxalase I family. As to quaternary structure, homodimer. Ni(2+) serves as cofactor.

It catalyses the reaction (R)-S-lactoylglutathione = methylglyoxal + glutathione. Its pathway is secondary metabolite metabolism; methylglyoxal degradation; (R)-lactate from methylglyoxal: step 1/2. Catalyzes the conversion of hemimercaptal, formed from methylglyoxal and glutathione, to S-lactoylglutathione. The sequence is that of Lactoylglutathione lyase (gloA) from Haemophilus influenzae (strain ATCC 51907 / DSM 11121 / KW20 / Rd).